Here is a 551-residue protein sequence, read N- to C-terminus: Glucans biosynthesis protein D (551 aa).

The tat-type signal signal peptide spans 1–32 (MNRRRFIKGSMAMAAVCGSSGIASLFSQAAFA).

The protein belongs to the OpgD/OpgG family. In terms of processing, predicted to be exported by the Tat system. The position of the signal peptide cleavage has not been experimentally proven.

The protein localises to the periplasm. The protein operates within glycan metabolism; osmoregulated periplasmic glucan (OPG) biosynthesis. Its function is as follows. Probably involved in the control of the structural glucose backbone of osmoregulated periplasmic glucans (OPGs). The sequence is that of Glucans biosynthesis protein D from Salmonella enteritidis PT4 (strain P125109).